A 618-amino-acid chain; its full sequence is Glutamine--fructose-6-phosphate aminotransferase [isomerizing] (618 aa).

C2 (nucleophile; for GATase activity) is an active-site residue. One can recognise a Glutamine amidotransferase type-2 domain in the interval 2 to 226 (CGIVGYAGRN…DFETAVLSPT (225 aa)). A disordered region spans residues 69–94 (HTRWATHGRPSTKNAHPHNSGGNPGK). SIS domains are found at residues 295–434 (SEDE…VRDR) and 467–608 (CAEG…IDKP). Catalysis depends on K613, which acts as the For Fru-6P isomerization activity.

In terms of assembly, homodimer.

It localises to the cytoplasm. The enzyme catalyses D-fructose 6-phosphate + L-glutamine = D-glucosamine 6-phosphate + L-glutamate. Functionally, catalyzes the first step in hexosamine metabolism, converting fructose-6P into glucosamine-6P using glutamine as a nitrogen source. In Methanosarcina acetivorans (strain ATCC 35395 / DSM 2834 / JCM 12185 / C2A), this protein is Glutamine--fructose-6-phosphate aminotransferase [isomerizing].